Here is a 382-residue protein sequence, read N- to C-terminus: S-adenosylmethionine synthase (382 aa).

Histidine 16 provides a ligand contact to ATP. Aspartate 18 is a Mg(2+) binding site. Glutamate 44 provides a ligand contact to K(+). L-methionine-binding residues include glutamate 57 and glutamine 100. The segment at 100-110 is flexible loop; sequence QSPDIAQGVDN. Residues 165-167, 231-232, aspartate 240, 246-247, and lysine 267 each bind ATP; these read DAK, RF, and RK. Aspartate 240 contributes to the L-methionine binding site. Lysine 271 is an L-methionine binding site.

The protein belongs to the AdoMet synthase family. Homotetramer; dimer of dimers. It depends on Mg(2+) as a cofactor. K(+) serves as cofactor.

Its subcellular location is the cytoplasm. It catalyses the reaction L-methionine + ATP + H2O = S-adenosyl-L-methionine + phosphate + diphosphate. It participates in amino-acid biosynthesis; S-adenosyl-L-methionine biosynthesis; S-adenosyl-L-methionine from L-methionine: step 1/1. In terms of biological role, catalyzes the formation of S-adenosylmethionine (AdoMet) from methionine and ATP. The overall synthetic reaction is composed of two sequential steps, AdoMet formation and the subsequent tripolyphosphate hydrolysis which occurs prior to release of AdoMet from the enzyme. This chain is S-adenosylmethionine synthase, found in Legionella pneumophila subsp. pneumophila (strain Philadelphia 1 / ATCC 33152 / DSM 7513).